A 378-amino-acid chain; its full sequence is MASALGAQASVAAPIGAGGYGRSSSSKGSNTVNFCNKSWIGTTLAWESKALKSRHMNKIFSMSVQQASKSKVAVKPLELDNAKEPPLNLYKPKEPYTATIVSVERLVGPKAPGETCHIVIDHGGNVPYWEGQSYGVIPPGENPKKPGSPNTVRLYSIASTRYGDSFDGKTASLCVRRAVYYDPETGKEDPTKKGICSNFLCDSKPGDKVQITGPSGKIMLLPEDDPNATHIMIATGTGVAPYRGYLRRMFMEDVPSFKFGGLAWLFLGVANTDSLLYDEEFTNYLQQYPDNFRYDKALSREQKNKNGGKMYVQDKIEEYSDEIFKLLDGGAHIYFCGLKGMMPGIQDTLKRVAEQRGESWEQKLSQLKKNKQWHVEVY.

Residues M1–M62 constitute a chloroplast transit peptide. The FAD-binding FR-type domain maps to K93–L221. FAD-binding positions include R153 to S156, C174 to R176, Y180, I195 to S197, and T237. NADP(+) contacts are provided by S156 and R176. Residues T237, V269 to A270, S299 to R300, K309, G337 to L338, and E376 each bind NADP(+).

The protein belongs to the ferredoxin--NADP reductase type 1 family. FAD is required as a cofactor.

Its subcellular location is the plastid. It localises to the chloroplast. It carries out the reaction 2 reduced [2Fe-2S]-[ferredoxin] + NADP(+) + H(+) = 2 oxidized [2Fe-2S]-[ferredoxin] + NADPH. It participates in energy metabolism; photosynthesis. Functionally, may play a key role in regulating the relative amounts of cyclic and non-cyclic electron flow to meet the demands of the plant for ATP and reducing power. Is involved in nitrate assimilation. In Oryza sativa subsp. japonica (Rice), this protein is Ferredoxin--NADP reductase, embryo isozyme, chloroplastic.